The primary structure comprises 511 residues: L-arabinose isomerase (511 aa).

Glu-316, Glu-343, His-360, and His-459 together coordinate Mn(2+).

It belongs to the arabinose isomerase family. Requires Mn(2+) as cofactor.

It catalyses the reaction beta-L-arabinopyranose = L-ribulose. The protein operates within carbohydrate degradation; L-arabinose degradation via L-ribulose; D-xylulose 5-phosphate from L-arabinose (bacterial route): step 1/3. Functionally, catalyzes the conversion of L-arabinose to L-ribulose. The protein is L-arabinose isomerase of Arthrobacter sp. (strain FB24).